The following is a 365-amino-acid chain: 3-dehydroquinate synthase (365 aa).

Residues 106 to 110 (GVIGD), 130 to 131 (TT), lysine 142, lysine 151, and 169 to 172 (FFAT) contribute to the NAD(+) site. Residues glutamate 184, histidine 247, and histidine 264 each coordinate Zn(2+).

Belongs to the sugar phosphate cyclases superfamily. Dehydroquinate synthase family. NAD(+) is required as a cofactor. Co(2+) serves as cofactor. It depends on Zn(2+) as a cofactor.

The protein localises to the cytoplasm. It carries out the reaction 7-phospho-2-dehydro-3-deoxy-D-arabino-heptonate = 3-dehydroquinate + phosphate. The protein operates within metabolic intermediate biosynthesis; chorismate biosynthesis; chorismate from D-erythrose 4-phosphate and phosphoenolpyruvate: step 2/7. Functionally, catalyzes the conversion of 3-deoxy-D-arabino-heptulosonate 7-phosphate (DAHP) to dehydroquinate (DHQ). The sequence is that of 3-dehydroquinate synthase from Listeria innocua serovar 6a (strain ATCC BAA-680 / CLIP 11262).